We begin with the raw amino-acid sequence, 1466 residues long: Adhesion G protein-coupled receptor L1 (1466 aa).

The N-terminal stretch at 1–28 (MARLAAALWSLCVTTVLVTSATQGLSRA) is a signal peptide. At 29 to 852 (GLPFGLMRRE…EIYQGRINEL (824 aa)) the chain is on the extracellular side. An SUEL-type lectin domain is found at 40–129 (ACEGYPIELR…KYLEVQYDCV (90 aa)). Intrachain disulfides connect cysteine 41–cysteine 71, cysteine 50–cysteine 128, cysteine 83–cysteine 115, cysteine 96–cysteine 102, and cysteine 135–cysteine 317. Residue glutamate 42 coordinates alpha-L-rhamnose. A glycan (N-linked (GlcNAc...) asparagine) is linked at asparagine 98. Alpha-L-rhamnose is bound at residue 117 to 120 (GTYK). An Olfactomedin-like domain is found at 134-393 (VCPGTLQKVL…VVRYSLEFGP (260 aa)). Positions 395-463 (DPSAGPATSP…APAPSTRRPP (69 aa)) are disordered. Residues 400–436 (PATSPPLSTTTTARPTPLTSTASPAATTPLRRAPLTT) are compositionally biased toward low complexity. Pro residues predominate over residues 448 to 463 (DLPPATAPAPSTRRPP). 2 disulfide bridges follow: cysteine 475/cysteine 510 and cysteine 498/cysteine 527. N-linked (GlcNAc...) asparagine glycosylation is found at asparagine 526, asparagine 635, asparagine 736, asparagine 795, asparagine 800, and asparagine 821. The region spanning 664–845 (PARFLAAKQN…AVLMAHREIY (182 aa)) is the GAIN-B domain. 2 cysteine pairs are disulfide-bonded: cysteine 796–cysteine 827 and cysteine 815–cysteine 829. Positions 796–845 (CSFWNYSERSMLGYWSTQGCRLVESNKTHTTCACSHLTNFAVLMAHREIY) are GPS. The chain crosses the membrane as a helical span at residues 853-873 (LLSVITWVGIVISLVCLAICI). Residues 874-887 (STFCFLRGLQTDRN) are Cytoplasmic-facing. A helical membrane pass occupies residues 888-908 (TIHKNLCINLFLAELLFLVGI). The Extracellular segment spans residues 909 to 914 (DKTQYE). A helical transmembrane segment spans residues 915 to 935 (VACPIFAGLLHYFFLAAFSWL). Residues 936–958 (CLEGVHLYLLLVEVFESEYSRTK) are Cytoplasmic-facing. The chain crosses the membrane as a helical span at residues 959–979 (YYYLGGYCFPALVVGIAAAID). Residues 980–996 (YRSYGTEKACWLRVDNY) lie on the Extracellular side of the membrane. The helical transmembrane segment at 997-1017 (FIWSFIGPVSFVIVVNLVFLM) threads the bilayer. Residues 1018–1044 (VTLHKMIRSSSVLKPDSSRLDNIKSWA) are Cytoplasmic-facing. The chain crosses the membrane as a helical span at residues 1045-1065 (LGAIALLFLLGLTWAFGLLFI). Residues 1066–1069 (NKES) lie on the Extracellular side of the membrane. A helical transmembrane segment spans residues 1070 to 1090 (VVMAYLFTTFNAFQGVFIFVF). At 1091–1466 (HCALQKKVHK…DGQMQLVTSL (376 aa)) the chain is on the cytoplasmic side. Residue arginine 1188 is modified to Omega-N-methylarginine. Serine 1214 bears the Phosphoserine mark. 4 disordered regions span residues 1242–1267 (FNNS…RGRN), 1288–1319 (RGAS…GPGS), 1352–1421 (ESES…SRPP), and 1443–1466 (YLAA…VTSL). The segment covering 1296 to 1307 (GPPPEPPVPPVP) has biased composition (pro residues). At serine 1319 the chain carries Phosphoserine. Over residues 1400–1412 (ALPPPPPAPPGPP) the composition is skewed to pro residues. Phosphoserine is present on residues serine 1448 and serine 1465.

Belongs to the G-protein coupled receptor 2 family. Adhesion G-protein coupled receptor (ADGR) subfamily. Forms a heterodimer, consisting of a large extracellular region (p120) non-covalently linked to a seven-transmembrane moiety (p85). Interacts with syntaxin and with proteins of the SHANK family via the PDZ domain. Interacts (via extracellular domain) with FLRT1, FLRT2 and FLRT3 (via extracellular domain). Autoproteolytically cleaved into 2 subunits, an extracellular subunit and a seven-transmembrane subunit. This proteolytic processing takes place early in the biosynthetic pathway, either in the endoplasmic reticulum or in the early compartment of the Golgi apparatus.

It localises to the cell membrane. It is found in the cell projection. The protein resides in the axon. The protein localises to the growth cone. Its subcellular location is the synapse. It localises to the presynaptic cell membrane. It is found in the synaptosome. In terms of biological role, calcium-independent receptor of high affinity for alpha-latrotoxin, an excitatory neurotoxin present in black widow spider venom which triggers massive exocytosis from neurons and neuroendocrine cells. Receptor for TENM2 that mediates heterophilic synaptic cell-cell contact and postsynaptic specialization. Receptor probably implicated in the regulation of exocytosis. In Mus musculus (Mouse), this protein is Adhesion G protein-coupled receptor L1.